The primary structure comprises 330 residues: MISFSSFYKQIADSSLQHWLETLPAILGQWQREHKHGTLPKWEKVLNKLHYPTPDIIDLKNSVSIGSGQQLAKGEREKLENLLRIFQPWRKGPFSVHGIDIDTEWRSDWKWERILPHLSPLNNRTVLDVGCGSGYHMWRMLGEGAKHVVGIDPSTLFLCQFEAIKRLAGDHHPVHLLPLGIEELPPLDAFDTVFSMGVLYHRRSPIDHLLQLRDQLRTGGELVLETLVIDGDENTVLVPEDRYGKMNNVWFLPSAAALELWLKKADFIDIKCVDIDVTSLAEQRSTDWMPNESLVDYLDPTNVDLTVEGYPAPKRATFIATKNQPNKDLT.

Residues Lys91, Trp105, Lys110, Gly130, 152–154 (DPS), 181–182 (IE), Met196, Tyr200, and Arg315 contribute to the carboxy-S-adenosyl-L-methionine site.

It belongs to the class I-like SAM-binding methyltransferase superfamily. CmoB family. Homotetramer.

The enzyme catalyses carboxy-S-adenosyl-L-methionine + 5-hydroxyuridine(34) in tRNA = 5-carboxymethoxyuridine(34) in tRNA + S-adenosyl-L-homocysteine + H(+). Functionally, catalyzes carboxymethyl transfer from carboxy-S-adenosyl-L-methionine (Cx-SAM) to 5-hydroxyuridine (ho5U) to form 5-carboxymethoxyuridine (cmo5U) at position 34 in tRNAs. This is tRNA U34 carboxymethyltransferase from Shewanella sediminis (strain HAW-EB3).